The primary structure comprises 456 residues: Nuclear distribution protein PAC1 (456 aa).

The region spanning 9-41 (QADELHKSIIAYLSANDLPNTAAALRAELNLTE) is the LisH domain. Positions 61–88 (TSIVRLQKKIMDLEARNAALQSELDNLT) form a coiled coil. WD repeat units follow at residues 114–153 (SHRDTINCIAFHPKFSSLASGSDDFTIKIWDWELGELEMT), 156–197 (GHTR…KNVR), 201–240 (GHDHSVSAVRFIPCRNLLASASRDKDVRIWDVTTGYCVRS), 243–282 (GHTGWVRDVCPSFDGNFLFSSGDDMTARLWDISAIPNPEN), 288–348 (GHEH…LMTL), 350–389 (GHDNWVRGIVFHPAGKYLLSVSDDRTLRCWDLSQEGKCVK), 394–437 (AHDR…PDVQ), and 439–456 (RCVIATGSVDRKLQIFAA).

It belongs to the WD repeat LIS1/nudF family. Self-associates. Interacts with NDL1 and dynein.

It is found in the cytoplasm. It localises to the cytoskeleton. The protein resides in the spindle pole. In terms of biological role, positively regulates the activity of the minus-end directed microtubule motor protein dynein. May enhance dynein-mediated microtubule sliding by targeting dynein to the microtubule plus end. Required for nuclear migration during vegetative growth as well as development. Required for retrograde early endosome (EE) transport from the hyphal tip. Required for localization of dynein to the mitotic spindle poles. Recruits additional proteins to the dynein complex at SPBs. The chain is Nuclear distribution protein PAC1 from Ajellomyces capsulatus (strain H143) (Darling's disease fungus).